Reading from the N-terminus, the 148-residue chain is UPF0260 protein YcgN (148 aa).

It belongs to the UPF0260 family.

The protein is UPF0260 protein YcgN of Salmonella paratyphi A (strain AKU_12601).